The following is a 315-amino-acid chain: Olfactory receptor 3A1 (315 aa).

Topologically, residues 1–28 (MQPESGANGTVIAEFILLGLLEAPGLQP) are extracellular. Residue Asn-8 is glycosylated (N-linked (GlcNAc...) asparagine). A helical membrane pass occupies residues 29 to 52 (VVFVLFLFAYLVTVGGNLSILAAV). Residues 53–60 (LVEPKLHS) are Cytoplasmic-facing. The chain crosses the membrane as a helical span at residues 61-82 (PMYFFLGNLSVLDVGCISVTVP). Residues 83–103 (SMLSRLLSRKRAVPCGACLTQ) are Extracellular-facing. Cys-100 and Cys-192 are joined by a disulfide. The helical transmembrane segment at 104-123 (LFFFHLFVGVDCFLLTAMAY) threads the bilayer. The Cytoplasmic portion of the chain corresponds to 124 to 143 (DRFLAICRPLTYSTRMSQTV). The chain crosses the membrane as a helical span at residues 144–161 (QRMLVAASWACAFTNALT). The Extracellular portion of the chain corresponds to 162 to 199 (HTVAMSTLNFCGPNEVNHFYCDLPQLFQLSCSSTQLNE). A helical membrane pass occupies residues 200–223 (LLLFAVGFIMAGTPMALIVISYIH). At 224–240 (VAAAVLRIRSVEGRKKA) the chain is on the cytoplasmic side. The chain crosses the membrane as a helical span at residues 241–264 (FSTCGSHLTVVAMFYGSGIFNYMR). At 265-275 (LGSTKLSDKDK) the chain is on the extracellular side. The chain crosses the membrane as a helical span at residues 276–295 (AVGIFNTVINPMVNPIIYRF). The Cytoplasmic segment spans residues 296-315 (RNPEVQSAIWRMLTGRRSLA).

This sequence belongs to the G-protein coupled receptor 1 family.

It is found in the cell membrane. In terms of biological role, odorant receptor. The sequence is that of Olfactory receptor 3A1 (OR3A1) from Pan troglodytes (Chimpanzee).